Here is a 297-residue protein sequence, read N- to C-terminus: 4-diphosphocytidyl-2-C-methyl-D-erythritol kinase (297 aa).

Residues K6 and D144 contribute to the active site.

This sequence belongs to the GHMP kinase family. IspE subfamily.

The enzyme catalyses 4-CDP-2-C-methyl-D-erythritol + ATP = 4-CDP-2-C-methyl-D-erythritol 2-phosphate + ADP + H(+). It participates in isoprenoid biosynthesis; isopentenyl diphosphate biosynthesis via DXP pathway; isopentenyl diphosphate from 1-deoxy-D-xylulose 5-phosphate: step 3/6. In terms of biological role, catalyzes the phosphorylation of the position 2 hydroxy group of 4-diphosphocytidyl-2C-methyl-D-erythritol. This Leptospira interrogans serogroup Icterohaemorrhagiae serovar copenhageni (strain Fiocruz L1-130) protein is 4-diphosphocytidyl-2-C-methyl-D-erythritol kinase.